The primary structure comprises 97 residues: Co-chaperonin GroES (97 aa).

The protein belongs to the GroES chaperonin family. As to quaternary structure, heptamer of 7 subunits arranged in a ring. Interacts with the chaperonin GroEL.

It localises to the cytoplasm. Together with the chaperonin GroEL, plays an essential role in assisting protein folding. The GroEL-GroES system forms a nano-cage that allows encapsulation of the non-native substrate proteins and provides a physical environment optimized to promote and accelerate protein folding. GroES binds to the apical surface of the GroEL ring, thereby capping the opening of the GroEL channel. This Buchnera aphidicola subsp. Cinara cedri (strain Cc) protein is Co-chaperonin GroES.